A 397-amino-acid chain; its full sequence is CCA-adding enzyme (397 aa).

Positions 27 and 30 each coordinate ATP. CTP contacts are provided by G27 and R30. Positions 40 and 42 each coordinate Mg(2+). ATP is bound by residues R111, D154, R157, R160, and R163. Residues R111, D154, R157, R160, and R163 each coordinate CTP.

Belongs to the tRNA nucleotidyltransferase/poly(A) polymerase family. Bacterial CCA-adding enzyme type 3 subfamily. As to quaternary structure, homodimer. Mg(2+) serves as cofactor.

The enzyme catalyses a tRNA precursor + 2 CTP + ATP = a tRNA with a 3' CCA end + 3 diphosphate. The catalysed reaction is a tRNA with a 3' CCA end + 2 CTP + ATP = a tRNA with a 3' CCACCA end + 3 diphosphate. Functionally, catalyzes the addition and repair of the essential 3'-terminal CCA sequence in tRNAs without using a nucleic acid template. Adds these three nucleotides in the order of C, C, and A to the tRNA nucleotide-73, using CTP and ATP as substrates and producing inorganic pyrophosphate. Has no poly(A) polymerase activity. The protein is CCA-adding enzyme of Bacillus subtilis (strain 168).